Reading from the N-terminus, the 452-residue chain is Probable cytosolic iron-sulfur protein assembly protein 1 (452 aa).

The segment covering 1–12 has biased composition (pro residues); that stretch reads MPPPTTPTPNPS. Positions 1 to 24 are disordered; it reads MPPPTTPTPNPSIPQKATLTPLPP. WD repeat units lie at residues 70–121, 161–200, 213–267, 273–319, 340–379, and 411–452; these read GHAR…DAAA, GHEN…QGGD, EHDG…EWVC, GHGG…FGGV, VHTR…EDVA, and YEVN…VRIS.

Belongs to the WD repeat CIA1 family.

Its function is as follows. Essential component of the cytosolic iron-sulfur (Fe/S) protein assembly machinery. Required for the maturation of extramitochondrial Fe/S proteins. The sequence is that of Probable cytosolic iron-sulfur protein assembly protein 1 from Chaetomium globosum (strain ATCC 6205 / CBS 148.51 / DSM 1962 / NBRC 6347 / NRRL 1970) (Soil fungus).